We begin with the raw amino-acid sequence, 396 residues long: MLESHPAEAATPLLDALQAELADRARLGLLRQRRVLHGMQGVYVEIEGKRLLSFCSNDYLGLASHPSLISAMRDCAVTTGAGTGASHLVSGHQQAHEALEHALQTFMGLPGVLLFTTGYMANLGIITALCGRQDAIFADKLNHASLNDAALLSRAELKRYAHNDLTGLERLLAQSQARRKLVVADAVFSMDGDLAPVPALLSLCERYDAYLMLDDAHGFGVLGAHGRGVLEHFGLDSPRIIYMATLGKAAGAAGAFVAGPTILTEYLMQTARPYIYTTASPAPVAAAAMAGVQLIEHDHARRAHLRALIADFRASCRLQRWQLMASETAIQPVVIGSNEEAVQVSKRLLEHGVLVPAIRPPTVPRGTARLRISLSAAHTHEDVQRLLDILHRLEEA.

Arg31 is a binding site for substrate. 118–119 lines the pyridoxal 5'-phosphate pocket; the sequence is GY. His143 provides a ligand contact to substrate. Residues Ser189, His217, and Thr245 each contribute to the pyridoxal 5'-phosphate site. Lys248 bears the N6-(pyridoxal phosphate)lysine mark. Thr362 provides a ligand contact to substrate.

It belongs to the class-II pyridoxal-phosphate-dependent aminotransferase family. BioF subfamily. In terms of assembly, homodimer. The cofactor is pyridoxal 5'-phosphate.

It carries out the reaction 6-carboxyhexanoyl-[ACP] + L-alanine + H(+) = (8S)-8-amino-7-oxononanoate + holo-[ACP] + CO2. Its pathway is cofactor biosynthesis; biotin biosynthesis. Catalyzes the decarboxylative condensation of pimeloyl-[acyl-carrier protein] and L-alanine to produce 8-amino-7-oxononanoate (AON), [acyl-carrier protein], and carbon dioxide. This chain is 8-amino-7-oxononanoate synthase, found in Methylobacillus flagellatus (strain ATCC 51484 / DSM 6875 / VKM B-1610 / KT).